A 301-amino-acid polypeptide reads, in one-letter code: FNPCPYSDDTVKMIVLTRENKKYDFYTLDTIKNHNEFKDTITLKPHVFITHGFTSSATAENFVVMAKALLDKGNYLVILTDWRMAACTNEIAGLKLAYYPYAASNTRLVGNYIATVTKMLVQKYNVPMANIRLIGHSLGAHISGFAGKKVQELGLGKYPEIIGLDPAGPSFKSNDCSQRICETDANYVQIIHTSNRLGTERTLGTVDFYMNNGYNQPGCGLPIIGETCSHTRAVKYFTECIKHECCLIGVPKSKNPQPVSKCTRNECVCVGLNAKTYPKTGSFYVPVESKAPYCNNKGKII.

An intrachain disulfide couples C4 to C87. S137 serves as the catalytic Nucleophile. The active-site Charge relay system is D165. 2 disulfides stabilise this stretch: C176–C181 and C219–C228. H230 functions as the Charge relay system in the catalytic mechanism. 3 disulfides stabilise this stretch: C245-C269, C246-C294, and C262-C267.

Belongs to the AB hydrolase superfamily. Lipase family. As to expression, expressed by the venom gland.

Its subcellular location is the secreted. The catalysed reaction is a 1,2-diacyl-sn-glycero-3-phosphocholine + H2O = a 2-acyl-sn-glycero-3-phosphocholine + a fatty acid + H(+). Functionally, catalyzes the hydrolysis of phosphatidylcholine with phospholipase A1 activity. May act as an allergen and induce hemolytic activity. The chain is Phospholipase A1 from Vespa crabro (European hornet).